The chain runs to 281 residues: Endochitinase At2g43610 (281 aa).

Positions 1–28 (MATQNAILKKALIIFLFTLTIMTGTAFS) are cleaved as a signal peptide. The region spanning 29–66 (QNCGTNGCKGNMCCSRWGYCGTTKAYCGTGCQSGPCNS) is the Chitin-binding type-1 domain. Intrachain disulfides connect Cys-31/Cys-42, Cys-36/Cys-48, Cys-41/Cys-55, and Cys-59/Cys-64. The segment at 86 to 281 (GTIASVITPA…GVTPGTNLSC (196 aa)) is catalytic. Catalysis depends on Glu-148, which acts as the Proton donor. The N-linked (GlcNAc...) asparagine glycan is linked to Asn-278.

This sequence belongs to the glycosyl hydrolase 19 family. Chitinase class I subfamily.

It catalyses the reaction Random endo-hydrolysis of N-acetyl-beta-D-glucosaminide (1-&gt;4)-beta-linkages in chitin and chitodextrins.. The sequence is that of Endochitinase At2g43610 from Arabidopsis thaliana (Mouse-ear cress).